Here is a 152-residue protein sequence, read N- to C-terminus: Nucleoside diphosphate kinase (152 aa).

ATP contacts are provided by Lys12, Phe60, Arg88, Thr94, Arg105, and Asn115. His118 acts as the Pros-phosphohistidine intermediate in catalysis.

The protein belongs to the NDK family. In terms of assembly, homotrimer. The cofactor is Mg(2+).

It catalyses the reaction a 2'-deoxyribonucleoside 5'-diphosphate + ATP = a 2'-deoxyribonucleoside 5'-triphosphate + ADP. It carries out the reaction a ribonucleoside 5'-diphosphate + ATP = a ribonucleoside 5'-triphosphate + ADP. Major role in the synthesis of nucleoside triphosphates other than ATP. The ATP gamma phosphate is transferred to the NDP beta phosphate via a ping-pong mechanism, using a phosphorylated active-site intermediate. This chain is Nucleoside diphosphate kinase (ndk-1), found in Neurospora crassa (strain ATCC 24698 / 74-OR23-1A / CBS 708.71 / DSM 1257 / FGSC 987).